The primary structure comprises 286 residues: 33 kDa chaperonin (286 aa).

2 cysteine pairs are disulfide-bonded: Cys-225–Cys-227 and Cys-258–Cys-261.

This sequence belongs to the HSP33 family. Post-translationally, under oxidizing conditions two disulfide bonds are formed involving the reactive cysteines. Under reducing conditions zinc is bound to the reactive cysteines and the protein is inactive.

The protein resides in the cytoplasm. Its function is as follows. Redox regulated molecular chaperone. Protects both thermally unfolding and oxidatively damaged proteins from irreversible aggregation. Plays an important role in the bacterial defense system toward oxidative stress. The chain is 33 kDa chaperonin from Shewanella sp. (strain MR-4).